The primary structure comprises 428 residues: MEELGIVTPVEKAVEEKPAVKSYASLLAQLNGTVNNNSALSNVNSDIYFKLKKLEKEYELLTLQEDYIKDEQRHLKRELKRAQEEVKRIQSVPLVIGQFLEPIDQNTGIVSSTTGMSYVVRILSTLDRELLKPSMSVALHRHSNALVDILPPDSDSSISVMGENEKPDVTYADVGGLDMQKQEIREAVELPLVQADLYEQIGIDPPRGVLLYGPPGTGKTMLVKAVANSTKAAFIRVNGSEFVHKYLGEGPRMVRDVFRLARENAPSIIFIDEVDSIATKRFDAQTGSDREVQRILIELLTQMDGFDQSTNVKVIMATNRADTLDPALLRPGRLDRKIEFPSLRDRRERRLIFGTIASKMSLAPEADLDSLIIRNDSLSGAVIAAIMQEAGLRAVRKNRYVILQSDLEEAYATQVKTDNTVDKFDFYK.

N-acetylmethionine is present on M1. Residue 213–220 (GPPGTGKT) participates in ATP binding. A Glycyl lysine isopeptide (Lys-Gly) (interchain with G-Cter in ubiquitin) cross-link involves residue K280.

It belongs to the AAA ATPase family. N-acetylated by NAT3.

It localises to the cytoplasm. The protein resides in the nucleus. Functionally, the 26S proteasome is involved in the ATP-dependent degradation of ubiquitinated proteins. The regulatory (or ATPase) complex confers ATP dependency and substrate specificity to the 26S complex. The protein is 26S proteasome regulatory subunit 6B homolog (RPT3) of Saccharomyces cerevisiae (strain ATCC 204508 / S288c) (Baker's yeast).